Reading from the N-terminus, the 482-residue chain is Protein DETOXIFICATION 9 (482 aa).

Helical transmembrane passes span V32 to L49, A64 to F84, F111 to M131, I144 to V164, P180 to V200, G209 to M229, A261 to L281, S289 to G309, A332 to L352, I374 to I394, I403 to L423, and W435 to F455.

It belongs to the multi antimicrobial extrusion (MATE) (TC 2.A.66.1) family.

The protein resides in the membrane. This is Protein DETOXIFICATION 9 from Arabidopsis thaliana (Mouse-ear cress).